The following is a 242-amino-acid chain: MAEPEERSLDDFFAKRDKKKKKDKGGSGSAAGSRGPARPSDGATSSSLSSYVSAAGKGVKKEKSGKSENPDQLQEKEEDEWKEFEQKEVDYSGLRLQSLQISNEKEDDENENKEEQGADWEESGGFGSDKSSGPWNKTAQAQAPISAVEEAPEPVHTGGVYRPPGARASVTTRKPQGPPEIYSDTQFPSPQATAKHTESRREKEMEKTFEIVKHKNRASNEAAKNPAPRPQLDNQYAVLGEQ.

Residues 1-15 are compositionally biased toward basic and acidic residues; that stretch reads MAEPEERSLDDFFAK. The tract at residues 1–242 is disordered; the sequence is MAEPEERSLD…DNQYAVLGEQ (242 aa). Position 2 is an N-acetylalanine (Ala-2). Residues 30 to 57 are compositionally biased toward low complexity; the sequence is AAGSRGPARPSDGATSSSLSSYVSAAGK. Residues 59 to 75 show a composition bias toward basic and acidic residues; it reads VKKEKSGKSENPDQLQE. Residues 105–122 show a composition bias toward acidic residues; that stretch reads KEDDENENKEEQGADWEE. Composition is skewed to polar residues over residues 129–143 and 183–194; these read DKSS…QAQA and SDTQFPSPQATA. Basic and acidic residues predominate over residues 195 to 213; the sequence is KHTESRREKEMEKTFEIVK.

Belongs to the CDV3 family.

The protein resides in the cytoplasm. This Xenopus laevis (African clawed frog) protein is Protein CDV3 homolog B (cdv3-b).